Here is a 266-residue protein sequence, read N- to C-terminus: Undecaprenyl-diphosphatase (266 aa).

The next 7 membrane-spanning stretches (helical) occupy residues 38–58 (SDMFNIVIQAGAILAVTIIYW), 80–100 (LIVAFLITAVLGLVVKKVLHF), 108–128 (PIAWALIIGGFWMIFAEWAAA), 136–156 (ITWLVAILVGIAQIVAGIFPG), 176–196 (AAATEFAFLVGIPTMYAASGY), 217–237 (IAFVVSTIVAFIAVKWLLAYI), and 245–265 (FAVYRIILGVLLLGMAATGLI).

The protein belongs to the UppP family.

The protein resides in the cell inner membrane. It carries out the reaction di-trans,octa-cis-undecaprenyl diphosphate + H2O = di-trans,octa-cis-undecaprenyl phosphate + phosphate + H(+). Its function is as follows. Catalyzes the dephosphorylation of undecaprenyl diphosphate (UPP). Confers resistance to bacitracin. This Rhizobium leguminosarum bv. trifolii (strain WSM2304) protein is Undecaprenyl-diphosphatase.